A 217-amino-acid polypeptide reads, in one-letter code: tRNA (guanine-N(7)-)-methyltransferase (217 aa).

S-adenosyl-L-methionine contacts are provided by glutamate 44, glutamate 69, aspartate 96, and aspartate 118. Aspartate 118 is an active-site residue. Substrate-binding positions include lysine 122, aspartate 154, and 191-194 (TEYE).

It belongs to the class I-like SAM-binding methyltransferase superfamily. TrmB family.

It catalyses the reaction guanosine(46) in tRNA + S-adenosyl-L-methionine = N(7)-methylguanosine(46) in tRNA + S-adenosyl-L-homocysteine. Its pathway is tRNA modification; N(7)-methylguanine-tRNA biosynthesis. In terms of biological role, catalyzes the formation of N(7)-methylguanine at position 46 (m7G46) in tRNA. The polypeptide is tRNA (guanine-N(7)-)-methyltransferase (Bacillus cytotoxicus (strain DSM 22905 / CIP 110041 / 391-98 / NVH 391-98)).